Here is a 300-residue protein sequence, read N- to C-terminus: Ribosomal protein L11 methyltransferase (300 aa).

S-adenosyl-L-methionine-binding residues include Thr-152, Gly-173, Asp-195, and Asn-234.

This sequence belongs to the methyltransferase superfamily. PrmA family.

It is found in the cytoplasm. The catalysed reaction is L-lysyl-[protein] + 3 S-adenosyl-L-methionine = N(6),N(6),N(6)-trimethyl-L-lysyl-[protein] + 3 S-adenosyl-L-homocysteine + 3 H(+). Functionally, methylates ribosomal protein L11. This is Ribosomal protein L11 methyltransferase from Paraburkholderia phymatum (strain DSM 17167 / CIP 108236 / LMG 21445 / STM815) (Burkholderia phymatum).